Here is a 310-residue protein sequence, read N- to C-terminus: Aspartate carbamoyltransferase catalytic subunit (310 aa).

R58 and T59 together coordinate carbamoyl phosphate. An L-aspartate-binding site is contributed by K87. R108, H136, and Q139 together coordinate carbamoyl phosphate. L-aspartate-binding residues include R169 and R229. L268 and P269 together coordinate carbamoyl phosphate.

The protein belongs to the aspartate/ornithine carbamoyltransferase superfamily. ATCase family. Heterododecamer (2C3:3R2) of six catalytic PyrB chains organized as two trimers (C3), and six regulatory PyrI chains organized as three dimers (R2).

The catalysed reaction is carbamoyl phosphate + L-aspartate = N-carbamoyl-L-aspartate + phosphate + H(+). It functions in the pathway pyrimidine metabolism; UMP biosynthesis via de novo pathway; (S)-dihydroorotate from bicarbonate: step 2/3. Functionally, catalyzes the condensation of carbamoyl phosphate and aspartate to form carbamoyl aspartate and inorganic phosphate, the committed step in the de novo pyrimidine nucleotide biosynthesis pathway. This Leptospira biflexa serovar Patoc (strain Patoc 1 / Ames) protein is Aspartate carbamoyltransferase catalytic subunit.